A 397-amino-acid polypeptide reads, in one-letter code: Tryptophan synthase beta chain (397 aa).

K87 is modified (N6-(pyridoxal phosphate)lysine).

Belongs to the TrpB family. In terms of assembly, tetramer of two alpha and two beta chains. Pyridoxal 5'-phosphate is required as a cofactor.

The enzyme catalyses (1S,2R)-1-C-(indol-3-yl)glycerol 3-phosphate + L-serine = D-glyceraldehyde 3-phosphate + L-tryptophan + H2O. It functions in the pathway amino-acid biosynthesis; L-tryptophan biosynthesis; L-tryptophan from chorismate: step 5/5. Its function is as follows. The beta subunit is responsible for the synthesis of L-tryptophan from indole and L-serine. This Salmonella arizonae (strain ATCC BAA-731 / CDC346-86 / RSK2980) protein is Tryptophan synthase beta chain.